The sequence spans 429 residues: D-inositol 3-phosphate glycosyltransferase (429 aa).

H20 serves as a coordination point for 1D-myo-inositol 3-phosphate. Residues 26-27 (QP) and G34 contribute to the UDP-N-acetyl-alpha-D-glucosamine site. 1D-myo-inositol 3-phosphate-binding positions include 31–36 (DAGGMN), K89, Y122, T146, and R166. UDP-N-acetyl-alpha-D-glucosamine is bound by residues R240, K245, and Q306. Y315, R316, and A318 together coordinate Mg(2+). UDP-N-acetyl-alpha-D-glucosamine contacts are provided by E328 and E336. T342 is a Mg(2+) binding site.

The protein belongs to the glycosyltransferase group 1 family. MshA subfamily. As to quaternary structure, homodimer.

The catalysed reaction is 1D-myo-inositol 3-phosphate + UDP-N-acetyl-alpha-D-glucosamine = 1D-myo-inositol 2-acetamido-2-deoxy-alpha-D-glucopyranoside 3-phosphate + UDP + H(+). Catalyzes the transfer of a N-acetyl-glucosamine moiety to 1D-myo-inositol 3-phosphate to produce 1D-myo-inositol 2-acetamido-2-deoxy-glucopyranoside 3-phosphate in the mycothiol biosynthesis pathway. The chain is D-inositol 3-phosphate glycosyltransferase from Nocardiopsis dassonvillei (strain ATCC 23218 / DSM 43111 / CIP 107115 / JCM 7437 / KCTC 9190 / NBRC 14626 / NCTC 10488 / NRRL B-5397 / IMRU 509) (Actinomadura dassonvillei).